A 372-amino-acid chain; its full sequence is Alpha-parvin (372 aa).

The interval 1–31 (MATSPQKSPLVPKSPTPKSPPSRKKDDSFLG) is disordered. Residue Ala2 is modified to N-acetylalanine. A phosphoserine mark is found at Ser8, Ser14, and Ser19. Residues 21–25 (PSRKK) are interaction with ARHGAP31. Phosphoserine occurs at positions 28 and 62. Calponin-homology (CH) domains lie at 95–202 (QELM…QYFR) and 262–369 (NVVK…TKYR). The interval 223–372 (GILQSRQIQE…NLFTKYRNVE (150 aa)) is required for interaction with TESK1 and ILK.

Belongs to the parvin family. In terms of assembly, component of the heterotrimeric IPP (ILK-PINCH-PARVIN) complex composed of ILK, LIMS1/PINCH and PARVA; the complex binds to F-actin via the C-terminal tail of LIMS1 and the N-terminal region of PARVA, promoting F-actin filament bundling. Interacts with TGFB1I1. Interacts with ARHGAP31. Interacts with the actin cytoskeleton. Interacts (via C-terminus) with TESK1 (via C-terminus); the interaction inhibits TESK1 kinase activity. Interacts with PXN/PAXILLIN (via LD motif 4).

The protein resides in the cell junction. It localises to the focal adhesion. The protein localises to the cell membrane. Its subcellular location is the cytoplasm. It is found in the cytoskeleton. The protein resides in the myofibril. It localises to the sarcomere. The protein localises to the z line. Functionally, plays a role in sarcomere organization and in smooth muscle cell contraction. Required for normal development of the embryonic cardiovascular system, and for normal septation of the heart outflow tract. Plays a role in sprouting angiogenesis and is required for normal adhesion of vascular smooth muscle cells to endothelial cells during blood vessel development. Plays a role in the reorganization of the actin cytoskeleton, formation of lamellipodia and ciliogenesis. Plays a role in the establishment of cell polarity, cell adhesion, cell spreading, and directed cell migration. Within the IPP (ILK-PINCH-PARVIN) complex, binds to F-actin, promoting F-actin bundling, a process required to generate force for actin cytoskeleton reorganization and subsequent dynamic cell adhesion events such as cell spreading and migration. The protein is Alpha-parvin (Parva) of Mus musculus (Mouse).